Consider the following 265-residue polypeptide: Indole-3-glycerol phosphate synthase (265 aa).

It belongs to the TrpC family.

The catalysed reaction is 1-(2-carboxyphenylamino)-1-deoxy-D-ribulose 5-phosphate + H(+) = (1S,2R)-1-C-(indol-3-yl)glycerol 3-phosphate + CO2 + H2O. The protein operates within amino-acid biosynthesis; L-tryptophan biosynthesis; L-tryptophan from chorismate: step 4/5. In Xanthomonas oryzae pv. oryzae (strain PXO99A), this protein is Indole-3-glycerol phosphate synthase.